A 239-amino-acid chain; its full sequence is 2',3'-cyclic-nucleotide 3'-phosphodiesterase (239 aa).

Residues His-39 and His-150 each act as proton donor/acceptor in the active site.

It belongs to the 2H phosphoesterase superfamily. CPD1 family.

The protein localises to the golgi apparatus. The catalysed reaction is ADP-alpha-D-ribose 1'',2''-cyclic phosphate + H2O = ADP-alpha-D-ribose 1''-phosphate + H(+). The enzyme catalyses 2',3'-cyclophospho-AMP + H2O = adenosine 2'-phosphate + H(+). It catalyses the reaction 2',3'-cyclophospho-GMP + H2O = guanosine 2'-phosphate + H(+). It carries out the reaction 2',3'-cyclophospho-UMP + H2O = uridine 2'-phosphate + H(+). The catalysed reaction is 2',3'-cyclophospho-CMP + H2O = cytidine 2'-phosphate + H(+). The enzyme catalyses a nucleoside 2',3'-cyclic phosphate + H2O = a nucleoside 2'-phosphate + H(+). Involved in the metabolism of ADP-ribose 1',2'-cyclic phosphate which is produced as a consequence of tRNA splicing. The chain is 2',3'-cyclic-nucleotide 3'-phosphodiesterase from Saccharomyces cerevisiae (strain ATCC 204508 / S288c) (Baker's yeast).